Here is a 161-residue protein sequence, read N- to C-terminus: Large ribosomal subunit protein uL11 (161 aa).

This sequence belongs to the universal ribosomal protein uL11 family. Part of the ribosomal stalk of the 50S ribosomal subunit. Interacts with L10 and the large rRNA to form the base of the stalk. L10 forms an elongated spine to which L12 dimers bind in a sequential fashion forming a multimeric L10(L12)X complex.

Its function is as follows. Forms part of the ribosomal stalk which helps the ribosome interact with GTP-bound translation factors. The protein is Large ribosomal subunit protein uL11 of Methanosarcina mazei (strain ATCC BAA-159 / DSM 3647 / Goe1 / Go1 / JCM 11833 / OCM 88) (Methanosarcina frisia).